Reading from the N-terminus, the 341-residue chain is tRNA N6-adenosine threonylcarbamoyltransferase (341 aa).

Fe cation is bound by residues His115 and His119. Substrate contacts are provided by residues 137-141 (IVSGG), Asp170, Gly183, Asp187, and Asn276. Fe cation is bound at residue Asp304.

This sequence belongs to the KAE1 / TsaD family. Fe(2+) is required as a cofactor.

It localises to the cytoplasm. The catalysed reaction is L-threonylcarbamoyladenylate + adenosine(37) in tRNA = N(6)-L-threonylcarbamoyladenosine(37) in tRNA + AMP + H(+). In terms of biological role, required for the formation of a threonylcarbamoyl group on adenosine at position 37 (t(6)A37) in tRNAs that read codons beginning with adenine. Is involved in the transfer of the threonylcarbamoyl moiety of threonylcarbamoyl-AMP (TC-AMP) to the N6 group of A37, together with TsaE and TsaB. TsaD likely plays a direct catalytic role in this reaction. The polypeptide is tRNA N6-adenosine threonylcarbamoyltransferase (Staphylococcus aureus (strain MSSA476)).